Reading from the N-terminus, the 244-residue chain is MKIDLNADLGEGCASDAELLTLVSSANIACGFHAGDAQTMQACVREAIKNGVAIGAHPSFPDRENFGRSAMQLPPETVYAQTLYQIGALATIARAQGGVMRHVKPHGMLYNQAAKEAQLADAIARAVYACDPALVLVGLAGSELIRAGKQYGLTTREEVFADRGYQADGSLVPRNQPGALIENEEQALAQTLEMVQHGRVKSITGEWATVTAQTVCLHGDGEHALAFARRLRSTFAEKGIVVAA.

Belongs to the LamB/PxpA family. Forms a complex composed of PxpA, PxpB and PxpC.

It carries out the reaction 5-oxo-L-proline + ATP + 2 H2O = L-glutamate + ADP + phosphate + H(+). Functionally, catalyzes the cleavage of 5-oxoproline to form L-glutamate coupled to the hydrolysis of ATP to ADP and inorganic phosphate. In Shigella dysenteriae serotype 1 (strain Sd197), this protein is 5-oxoprolinase subunit A.